Consider the following 477-residue polypeptide: MIEVLLVTICLAAFPYQGSSIILESGNVNDYEVIYPRKVTALPKGAVQPKYEDAMQYELKVNGEPVVLHLEKNKGLFSKDYSETHYSPDGRKITTNPPVEDHCYYHGRIENDADSTASISACNGLKGHFKLQGETYLIEPLKLSDSEAHAVFKFENVEKEDEAPKMCGVTQNWESYEPIKKASQSNLTPEHQRYIELFLVVDHGMFMKYNGNSDKIRRRIHQMVNIMKEAYRYLYIDIALTGVEIWSNKDMINVQPAAPQTLDSFGEWRKTDLLNRKSHDNAQLLTSTDFKDQTIGLAYWGSMCDPKRSTAVIEDHSETDLLVAVTMAHELGHNLGIRHDTGSCSCGGYSCIMAPVISHDIAKYFSDCSYIQCWDFIMKDNPQCILNKQLRTDTVSTPVSGKNFGAGEECDCGTPGNPCCDAVTCKLRPGAQCAEGLCCDQCRFMKEGTVCRRARGDDMDDYCNGISAGCPRNPFHA.

The signal sequence occupies residues M1–S20. Residues I21–L187 constitute a propeptide that is removed on maturation. Residues R193–Q389 enclose the Peptidase M12B domain. Positions 196 and 280 each coordinate Ca(2+). 3 cysteine pairs are disulfide-bonded: C304–C384, C344–C368, and C346–C351. H329 provides a ligand contact to Zn(2+). E330 is an active-site residue. Positions 333 and 339 each coordinate Zn(2+). Positions 384 and 387 each coordinate Ca(2+). The propeptide occupies L390–F404. Positions S396 to A477 constitute a Disintegrin domain. Intrachain disulfides connect C410/C425, C412/C420, C419/C442, C433/C439, C438/C463, and C451/C470. The Cell attachment site motif lies at R455 to D457.

Belongs to the venom metalloproteinase (M12B) family. P-II subfamily. P-IIa sub-subfamily. In terms of assembly, monomer. The cofactor is Zn(2+). In terms of tissue distribution, expressed by the venom gland.

It localises to the secreted. Inhibited by 1,10-phenanthroline and EDTA. Its function is as follows. Impairs hemostasis in the envenomed animal. Does not exhibit detectable plasminogen activating activity. Has hemagglutinating activity on red blood cells. Cleaves insulin B chain at '38-Ala-|-Leu-39' and '40-Tyr-|-Leu-41' bonds. In terms of biological role, this recombinant protein shows high inhibitory activity on collagen-induced platelet aggregation. This chain is Zinc metalloproteinase/disintegrin, found in Bothrops jararaca (Jararaca).